A 140-amino-acid chain; its full sequence is ATP synthase epsilon chain (140 aa).

It belongs to the ATPase epsilon chain family. As to quaternary structure, F-type ATPases have 2 components, CF(1) - the catalytic core - and CF(0) - the membrane proton channel. CF(1) has five subunits: alpha(3), beta(3), gamma(1), delta(1), epsilon(1). CF(0) has three main subunits: a, b and c.

It localises to the cell membrane. Its function is as follows. Produces ATP from ADP in the presence of a proton gradient across the membrane. The polypeptide is ATP synthase epsilon chain (Dehalococcoides mccartyi (strain ATCC BAA-2100 / JCM 16839 / KCTC 5957 / BAV1)).